Consider the following 101-residue polypeptide: NADH-quinone oxidoreductase subunit K (101 aa).

A run of 3 helical transmembrane segments spans residues 4–24 (LGHL…GIFL), 30–50 (IVLL…FIAF), and 62–82 (FVFF…AILV).

It belongs to the complex I subunit 4L family. As to quaternary structure, NDH-1 is composed of 14 different subunits. Subunits NuoA, H, J, K, L, M, N constitute the membrane sector of the complex.

It is found in the cell inner membrane. It carries out the reaction a quinone + NADH + 5 H(+)(in) = a quinol + NAD(+) + 4 H(+)(out). Its function is as follows. NDH-1 shuttles electrons from NADH, via FMN and iron-sulfur (Fe-S) centers, to quinones in the respiratory chain. The immediate electron acceptor for the enzyme in this species is believed to be ubiquinone. Couples the redox reaction to proton translocation (for every two electrons transferred, four hydrogen ions are translocated across the cytoplasmic membrane), and thus conserves the redox energy in a proton gradient. The sequence is that of NADH-quinone oxidoreductase subunit K from Xylella fastidiosa (strain Temecula1 / ATCC 700964).